The primary structure comprises 475 residues: Ribulose bisphosphate carboxylase large chain (475 aa).

Positions 1–2 are excised as a propeptide; that stretch reads MV. Pro3 is subject to N-acetylproline. Residue Lys14 is modified to N6,N6,N6-trimethyllysine. 2 residues coordinate substrate: Asn123 and Thr173. Lys175 serves as the catalytic Proton acceptor. Residue Lys177 coordinates substrate. 3 residues coordinate Mg(2+): Lys201, Asp203, and Glu204. The residue at position 201 (Lys201) is an N6-carboxylysine. The active-site Proton acceptor is His294. Substrate is bound by residues Arg295, His327, and Ser379.

This sequence belongs to the RuBisCO large chain family. Type I subfamily. As to quaternary structure, heterohexadecamer of 8 large chains and 8 small chains; disulfide-linked. The disulfide link is formed within the large subunit homodimers. It depends on Mg(2+) as a cofactor. The disulfide bond which can form in the large chain dimeric partners within the hexadecamer appears to be associated with oxidative stress and protein turnover.

It is found in the plastid. The protein resides in the chloroplast. The enzyme catalyses 2 (2R)-3-phosphoglycerate + 2 H(+) = D-ribulose 1,5-bisphosphate + CO2 + H2O. It carries out the reaction D-ribulose 1,5-bisphosphate + O2 = 2-phosphoglycolate + (2R)-3-phosphoglycerate + 2 H(+). RuBisCO catalyzes two reactions: the carboxylation of D-ribulose 1,5-bisphosphate, the primary event in carbon dioxide fixation, as well as the oxidative fragmentation of the pentose substrate in the photorespiration process. Both reactions occur simultaneously and in competition at the same active site. This chain is Ribulose bisphosphate carboxylase large chain, found in Tetradesmus obliquus (Green alga).